We begin with the raw amino-acid sequence, 434 residues long: Tryptophan synthase beta chain (434 aa).

An N6-(pyridoxal phosphate)lysine modification is found at K92. Residues 411 to 434 (VKGGVATSPESFDASGAKGAGSQS) form a disordered region.

It belongs to the TrpB family. In terms of assembly, tetramer of two alpha and two beta chains. It depends on pyridoxal 5'-phosphate as a cofactor.

The catalysed reaction is (1S,2R)-1-C-(indol-3-yl)glycerol 3-phosphate + L-serine = D-glyceraldehyde 3-phosphate + L-tryptophan + H2O. Its pathway is amino-acid biosynthesis; L-tryptophan biosynthesis; L-tryptophan from chorismate: step 5/5. Functionally, the beta subunit is responsible for the synthesis of L-tryptophan from indole and L-serine. The chain is Tryptophan synthase beta chain from Polaromonas naphthalenivorans (strain CJ2).